The sequence spans 235 residues: 2-C-methyl-D-erythritol 4-phosphate cytidylyltransferase (235 aa).

Belongs to the IspD/TarI cytidylyltransferase family. IspD subfamily.

It carries out the reaction 2-C-methyl-D-erythritol 4-phosphate + CTP + H(+) = 4-CDP-2-C-methyl-D-erythritol + diphosphate. It participates in isoprenoid biosynthesis; isopentenyl diphosphate biosynthesis via DXP pathway; isopentenyl diphosphate from 1-deoxy-D-xylulose 5-phosphate: step 2/6. Functionally, catalyzes the formation of 4-diphosphocytidyl-2-C-methyl-D-erythritol from CTP and 2-C-methyl-D-erythritol 4-phosphate (MEP). The polypeptide is 2-C-methyl-D-erythritol 4-phosphate cytidylyltransferase (Pseudomonas putida (strain ATCC 47054 / DSM 6125 / CFBP 8728 / NCIMB 11950 / KT2440)).